The primary structure comprises 95 residues: DNA-directed RNA polymerase subunit Rpo11 (95 aa).

Belongs to the archaeal Rpo11/eukaryotic RPB11/RPC19 RNA polymerase subunit family. As to quaternary structure, part of the RNA polymerase complex.

The protein localises to the cytoplasm. The enzyme catalyses RNA(n) + a ribonucleoside 5'-triphosphate = RNA(n+1) + diphosphate. DNA-dependent RNA polymerase (RNAP) catalyzes the transcription of DNA into RNA using the four ribonucleoside triphosphates as substrates. The sequence is that of DNA-directed RNA polymerase subunit Rpo11 from Pyrococcus abyssi (strain GE5 / Orsay).